A 100-amino-acid polypeptide reads, in one-letter code: Cell division protein DrpB (100 aa).

Residues 1-16 (MEYGSTKMEERLSRSP) lie on the Cytoplasmic side of the membrane. Residues 17 to 37 (GGKLALWAFYTWCGYFVWAMA) traverse the membrane as a helical segment. Residues 38–64 (RYIWVMSRIPDAPVSGFESDLGSTAGK) lie on the Periplasmic side of the membrane. The helical transmembrane segment at 65 to 85 (WLGALVGFLFMALVGALLGSI) threads the bilayer. At 86-100 (AWYTRPRPARSRRYE) the chain is on the cytoplasmic side.

Belongs to the DrpB family. In terms of assembly, bacterial adenylate cyclase hybrid (BACTH) studies show interaction of this protein with DamX, FtsI, FtsN, FtsQ, YmgF, DedD, FtsA and MalF, as well as weaker interactions with DedD, MalG and PBP2, but this assay often generates false positive results.

Its subcellular location is the cell inner membrane. In terms of biological role, a non-essential division protein that localizes to the septal ring in low ionic strength medium. Localizes to the septal ring in about 30% of observed cells before cell constriction occurs; localization occurs in low ionic strength medium (0 NaCl) and requires FtsZ but not FtsEX. Overexpression partially restores correct FtsI localization to the division septum in an ftsEX deletion. Isolated as a multicopy suppressor of an ftsEX deletion mutant; it does not suppress other cell division defects (e.g. ftsA, ftsI, ftsQ or ftsZ). The sequence is that of Cell division protein DrpB from Escherichia coli (strain K12).